Consider the following 284-residue polypeptide: Bifunctional protein FolD (284 aa).

Residues 166–168 (GAS) and Ile232 contribute to the NADP(+) site.

The protein belongs to the tetrahydrofolate dehydrogenase/cyclohydrolase family. In terms of assembly, homodimer.

It catalyses the reaction (6R)-5,10-methylene-5,6,7,8-tetrahydrofolate + NADP(+) = (6R)-5,10-methenyltetrahydrofolate + NADPH. The enzyme catalyses (6R)-5,10-methenyltetrahydrofolate + H2O = (6R)-10-formyltetrahydrofolate + H(+). It functions in the pathway one-carbon metabolism; tetrahydrofolate interconversion. In terms of biological role, catalyzes the oxidation of 5,10-methylenetetrahydrofolate to 5,10-methenyltetrahydrofolate and then the hydrolysis of 5,10-methenyltetrahydrofolate to 10-formyltetrahydrofolate. In Azotobacter vinelandii (strain DJ / ATCC BAA-1303), this protein is Bifunctional protein FolD.